Consider the following 330-residue polypeptide: D-lactate dehydrogenase (330 aa).

NAD(+)-binding positions include 155–156 (RI), aspartate 175, 206–207 (MP), asparagine 212, 233–235 (MAR), and aspartate 259. Arginine 235 is a catalytic residue. Glutamate 264 is a catalytic residue. Histidine 296 serves as the catalytic Proton donor.

Belongs to the D-isomer specific 2-hydroxyacid dehydrogenase family.

It carries out the reaction (R)-lactate + NAD(+) = pyruvate + NADH + H(+). This is D-lactate dehydrogenase (ldhD) from Streptococcus pyogenes serotype M1.